We begin with the raw amino-acid sequence, 784 residues long: Cas scaffolding protein family member 4 (784 aa).

The 63-residue stretch at 11-73 folds into the SH3 domain; the sequence is PKALLARALY…PANRLQILEE (63 aa). 5 positions are modified to phosphoserine: Ser197, Ser246, Ser302, Ser373, and Ser387. Residues 343–376 form a disordered region; sequence TPNIYDVPRAMPDVPQAGKELGKAGGPSENSVDH. Residues 466–536 are a coiled coil; it reads RDSLEANIDA…LLETKERLES (71 aa). The segment at 614–635 is disordered; sequence KEGESYQRKAPFQKQRASEQPP.

This sequence belongs to the CAS family. As to quaternary structure, interacts (via SH3 domain) with PTK2/FAK1 (via C-terminus). In terms of processing, phosphorylated on tyrosines by SRC.

It localises to the cytoplasm. Its subcellular location is the cytoskeleton. The protein localises to the cell junction. It is found in the focal adhesion. Functionally, docking protein that plays a role in tyrosine kinase-based signaling related to cell adhesion and cell spreading. Regulates PTK2/FAK1 activity, focal adhesion integrity, and cell spreading. The sequence is that of Cas scaffolding protein family member 4 from Sus scrofa (Pig).